The chain runs to 501 residues: ATP synthase subunit beta (501 aa).

An ATP-binding site is contributed by 153–160 (GGAGVGKT).

Belongs to the ATPase alpha/beta chains family. F-type ATPases have 2 components, CF(1) - the catalytic core - and CF(0) - the membrane proton channel. CF(1) has five subunits: alpha(3), beta(3), gamma(1), delta(1), epsilon(1). CF(0) has three main subunits: a(1), b(2) and c(9-12). The alpha and beta chains form an alternating ring which encloses part of the gamma chain. CF(1) is attached to CF(0) by a central stalk formed by the gamma and epsilon chains, while a peripheral stalk is formed by the delta and b chains.

Its subcellular location is the cell inner membrane. The enzyme catalyses ATP + H2O + 4 H(+)(in) = ADP + phosphate + 5 H(+)(out). In terms of biological role, produces ATP from ADP in the presence of a proton gradient across the membrane. The catalytic sites are hosted primarily by the beta subunits. The polypeptide is ATP synthase subunit beta (Cytophaga hutchinsonii (strain ATCC 33406 / DSM 1761 / CIP 103989 / NBRC 15051 / NCIMB 9469 / D465)).